A 1207-amino-acid polypeptide reads, in one-letter code: Systemin receptor SR160 (1207 aa).

An N-terminal signal peptide occupies residues 1–34 (MKAHKTVFNQHPLSLNKLFFVLLLIFFLPPASPA). The Cys pair 1 signature appears at 71–78 (CSFTGVSC). 20 LRR repeats span residues 109–131 (NLES…AKSQ), 135–157 (TLDS…SSFG), 161–181 (NLKS…EMLK), 186–207 (SLQV…PWVS), 213–234 (ELEF…LDFK), 235–257 (NLSY…KDCS), 258–280 (NLQH…LSSC), 282–304 (KLSF…PSES), 305–325 (LQYL…QLAD), 329–350 (TVVE…SLGE), 353–375 (SLEL…TLLK), 378–401 (NIKT…SNLP), 402–423 (KLET…GICK), 428–450 (NLKV…LSNC), 452–474 (QLVS…LGSL), 476–499 (KLKD…MYLQ), 500–523 (ALEN…SNCT), 524–547 (KLNW…GRLS), 548–570 (NLAI…LGNC), and 572–594 (SLIW…LFKQ). N-linked (GlcNAc...) asparagine glycosylation is present at Asn119. N-linked (GlcNAc...) asparagine glycans are attached at residues Asn166 and Asn196. Residues Asn235 and Asn245 are each glycosylated (N-linked (GlcNAc...) asparagine). The N-linked (GlcNAc...) asparagine glycan is linked to Asn287. Asn339 and Asn363 each carry an N-linked (GlcNAc...) asparagine glycan. 2 N-linked (GlcNAc...) asparagine glycosylation sites follow: Asn412 and Asn449. Asn521 is a glycosylation site (N-linked (GlcNAc...) asparagine). N-linked (GlcNAc...) asparagine glycans are attached at residues Asn556, Asn584, Asn646, and Asn662. LRR repeat units follow at residues 664-686 (SMIF…LGAM), 688-711 (YLSI…GGLK), 712-735 (NVAI…TSLT), and 736-758 (LLGE…APFD). N-linked (GlcNAc...) asparagine glycans are attached at residues Asn724, Asn746, and Asn767. A Cys pair 2 motif is present at residues 771–779 (CGYPLPLPC). The helical transmembrane segment at 803–823 (SVAMGLLFSLFCIFGLIIVAI) threads the bilayer. Residues 888-1163 (FHNDSLVGSG…IQVMAMFKEI (276 aa)) form the Protein kinase domain. Residues 894–902 (VGSGGFGDV) and Lys916 contribute to the ATP site. Catalysis depends on Asp1014, which acts as the Proton acceptor.

It belongs to the protein kinase superfamily. Ser/Thr protein kinase family. In terms of processing, glycosylated.

It is found in the cell membrane. It catalyses the reaction L-seryl-[protein] + ATP = O-phospho-L-seryl-[protein] + ADP + H(+). The catalysed reaction is L-threonyl-[protein] + ATP = O-phospho-L-threonyl-[protein] + ADP + H(+). Its function is as follows. Receptor with a serine/threonine-protein kinase activity. Involved in the perception of systemin, a peptide hormone responsible for the systemic activation of defense genes in leaves of wounded plants. May also regulate, in response to brassinosteroid binding, a signaling cascade involved in plant development. The sequence is that of Systemin receptor SR160 from Solanum peruvianum (Peruvian tomato).